A 197-amino-acid chain; its full sequence is Probable GTP-binding protein EngB (197 aa).

The EngB-type G domain maps to 2 to 186 (KVKEVIFAGR…KRDLKQYLLS (185 aa)). GTP-binding positions include 10-17 (GRSNVGKS), 35-39 (GTTIR), 52-55 (DLPG), 132-135 (NKMD), and 166-168 (VCA). Mg(2+)-binding residues include Ser-17 and Thr-37.

The protein belongs to the TRAFAC class TrmE-Era-EngA-EngB-Septin-like GTPase superfamily. EngB GTPase family. Mg(2+) is required as a cofactor.

Its function is as follows. Necessary for normal cell division and for the maintenance of normal septation. This is Probable GTP-binding protein EngB from Archaeoglobus fulgidus (strain ATCC 49558 / DSM 4304 / JCM 9628 / NBRC 100126 / VC-16).